The sequence spans 282 residues: uncharacterized protein (282 aa).

The protein belongs to the ycf80 family.

It localises to the plastid. The protein localises to the chloroplast. This is an uncharacterized protein from Guillardia theta (Cryptophyte).